We begin with the raw amino-acid sequence, 35 residues long: Conotoxin Cal6.1f (35 aa).

Positions 1–8 (GLIRPSKR) are excised as a propeptide. 3 disulfides stabilise this stretch: Cys-9–Cys-25, Cys-16–Cys-29, and Cys-24–Cys-34.

This sequence belongs to the conotoxin O1 superfamily. Expressed by the venom duct.

It is found in the secreted. Its function is as follows. Probable neurotoxin with unknown target. Possibly targets ion channels. This Californiconus californicus (California cone) protein is Conotoxin Cal6.1f.